The sequence spans 117 residues: Small ribosomal subunit protein uS17 (117 aa).

Residues 97–117 (AEGLAAAHAGEPETESAATDA) are disordered.

This sequence belongs to the universal ribosomal protein uS17 family. Part of the 30S ribosomal subunit.

In terms of biological role, one of the primary rRNA binding proteins, it binds specifically to the 5'-end of 16S ribosomal RNA. The protein is Small ribosomal subunit protein uS17 of Rhodopirellula baltica (strain DSM 10527 / NCIMB 13988 / SH1).